The chain runs to 226 residues: Ribonuclease 3 (226 aa).

Residues 6 to 128 (INRLQRKLGY…LIGGVFLDSD (123 aa)) form the RNase III domain. Glu-41 contributes to the Mg(2+) binding site. Asp-45 is an active-site residue. 2 residues coordinate Mg(2+): Asp-114 and Glu-117. Residue Glu-117 is part of the active site. The 71-residue stretch at 155 to 225 (DPKTRLQEYL…AEQALKMLEL (71 aa)) folds into the DRBM domain.

The protein belongs to the ribonuclease III family. As to quaternary structure, homodimer. Mg(2+) serves as cofactor.

It is found in the cytoplasm. It carries out the reaction Endonucleolytic cleavage to 5'-phosphomonoester.. Functionally, digests double-stranded RNA. Involved in the processing of primary rRNA transcript to yield the immediate precursors to the large and small rRNAs (23S and 16S). Processes some mRNAs, and tRNAs when they are encoded in the rRNA operon. Processes pre-crRNA and tracrRNA of type II CRISPR loci if present in the organism. The chain is Ribonuclease 3 from Enterobacter sp. (strain 638).